We begin with the raw amino-acid sequence, 507 residues long: GMP synthase [glutamine-hydrolyzing] (507 aa).

In terms of domain architecture, Glutamine amidotransferase type-1 spans 4–193 (KIIILDFGSQ…VVDVCGCKQD (190 aa)). C79 (nucleophile) is an active-site residue. Catalysis depends on residues H167 and E169. The region spanning 194–382 (WSPASFIEST…LGMPEHLITR (189 aa)) is the GMPS ATP-PPase domain. 221-227 (SGGVDSS) contributes to the ATP binding site.

As to quaternary structure, homodimer.

The catalysed reaction is XMP + L-glutamine + ATP + H2O = GMP + L-glutamate + AMP + diphosphate + 2 H(+). It functions in the pathway purine metabolism; GMP biosynthesis; GMP from XMP (L-Gln route): step 1/1. Catalyzes the synthesis of GMP from XMP. This chain is GMP synthase [glutamine-hydrolyzing], found in Bacteroides fragilis (strain ATCC 25285 / DSM 2151 / CCUG 4856 / JCM 11019 / LMG 10263 / NCTC 9343 / Onslow / VPI 2553 / EN-2).